A 92-amino-acid polypeptide reads, in one-letter code: Small ribosomal subunit protein uS19 (92 aa).

Belongs to the universal ribosomal protein uS19 family.

Its function is as follows. Protein S19 forms a complex with S13 that binds strongly to the 16S ribosomal RNA. This chain is Small ribosomal subunit protein uS19, found in Rickettsia africae (strain ESF-5).